The primary structure comprises 102 residues: UPF0213 protein Spro_0507 (102 aa).

The region spanning 6-81 is the GIY-YIG domain; it reads PTWHLYMLRM…KQLSKTQKER (76 aa).

This sequence belongs to the UPF0213 family.

This chain is UPF0213 protein Spro_0507, found in Serratia proteamaculans (strain 568).